A 675-amino-acid polypeptide reads, in one-letter code: DNA ligase (675 aa).

NAD(+) contacts are provided by residues aspartate 33–aspartate 37, serine 82–leucine 83, and glutamate 115. Lysine 117 (N6-AMP-lysine intermediate) is an active-site residue. NAD(+) is bound by residues arginine 138, glutamate 175, lysine 293, and lysine 317. The Zn(2+) site is built by cysteine 411, cysteine 414, cysteine 429, and cysteine 435. The 82-residue stretch at isoleucine 594–serine 675 folds into the BRCT domain.

This sequence belongs to the NAD-dependent DNA ligase family. LigA subfamily. Mg(2+) serves as cofactor. Requires Mn(2+) as cofactor.

The enzyme catalyses NAD(+) + (deoxyribonucleotide)n-3'-hydroxyl + 5'-phospho-(deoxyribonucleotide)m = (deoxyribonucleotide)n+m + AMP + beta-nicotinamide D-nucleotide.. DNA ligase that catalyzes the formation of phosphodiester linkages between 5'-phosphoryl and 3'-hydroxyl groups in double-stranded DNA using NAD as a coenzyme and as the energy source for the reaction. It is essential for DNA replication and repair of damaged DNA. The polypeptide is DNA ligase (Glaesserella parasuis serovar 5 (strain SH0165) (Haemophilus parasuis)).